The following is a 447-amino-acid chain: Phosphoglucosamine mutase (447 aa).

Serine 103 serves as the catalytic Phosphoserine intermediate. Positions 103, 242, 244, and 246 each coordinate Mg(2+). Residue serine 103 is modified to Phosphoserine.

This sequence belongs to the phosphohexose mutase family. It depends on Mg(2+) as a cofactor. Post-translationally, activated by phosphorylation.

The enzyme catalyses alpha-D-glucosamine 1-phosphate = D-glucosamine 6-phosphate. Catalyzes the conversion of glucosamine-6-phosphate to glucosamine-1-phosphate. This Dinoroseobacter shibae (strain DSM 16493 / NCIMB 14021 / DFL 12) protein is Phosphoglucosamine mutase.